A 369-amino-acid chain; its full sequence is MTAAPELRPKSWIDSIAPYIPGSSKTLDGRPAVKLSSNENPLGTSLKAKEAYREAIDSLSLYPDSGATALREAIGACYNLDPARIIHGTGSDEILHLAAGAYAGQDDEVLYPRYSFSVYPLAARRVGATPVEAPDDDYRCSVDALLKAVTPRTRVVFIANPNNPTGTWITRAEVEKLHNGLPRNCLLVIDQAYAEYLDPECDDGALALAKNTKNVLVTRTFSKIYGLAAERIGWAYACPEIIDALNRIRAPFNVTIAGQKAAVAALEDQAFIQNSFKHNKKWRGWFENQMALLSNAGIRVIPSSANFTLLLFEGSLTAETAYKALMDHGYTTRWLPGQRLPHALRITIGSEKHMQDVAGILTSLVRQAL.

Lys223 is subject to N6-(pyridoxal phosphate)lysine.

This sequence belongs to the class-II pyridoxal-phosphate-dependent aminotransferase family. Histidinol-phosphate aminotransferase subfamily. As to quaternary structure, homodimer. The cofactor is pyridoxal 5'-phosphate.

It carries out the reaction L-histidinol phosphate + 2-oxoglutarate = 3-(imidazol-4-yl)-2-oxopropyl phosphate + L-glutamate. It functions in the pathway amino-acid biosynthesis; L-histidine biosynthesis; L-histidine from 5-phospho-alpha-D-ribose 1-diphosphate: step 7/9. Its function is as follows. Catalyzes the conversion of imidazole acetol phosphate to histidinol phosphate. Can also transaminate aromatic amino acids and histidine in addition to histidinol phosphate. The protein is Histidinol-phosphate aminotransferase of Zymomonas mobilis subsp. mobilis (strain ATCC 31821 / ZM4 / CP4).